Reading from the N-terminus, the 281-residue chain is Ornithine lipid ester-linked acyl 2-hydroxylase (281 aa).

Positions 1–24 (MTESPLSAPAPTSNQSPAPEQTFG) are enriched in polar residues. The tract at residues 1 to 29 (MTESPLSAPAPTSNQSPAPEQTFGTAGIA) is disordered.

The protein belongs to the aspartyl/asparaginyl beta-hydroxylase family.

The enzyme catalyses an N(2)-[(3R)-3-(2-saturated-acyloxy)acyl]-L-ornithine lipid + 2-oxoglutarate + O2 = a 2-hydroxyornithine lipid + succinate + CO2. Its pathway is lipid metabolism. Functionally, involved in the biosynthesis of ornithine lipids (OLs), which are phosphorus-free membrane lipids. Catalyzes the hydroxylation at the 2 position of the secondary fatty acid of OL. Contributes to symbiotic performance and acid tolerance. This Rhizobium tropici protein is Ornithine lipid ester-linked acyl 2-hydroxylase.